The sequence spans 23 residues: Large ribosomal subunit protein uL10 (23 aa).

The protein belongs to the universal ribosomal protein uL10 family. Part of the ribosomal stalk of the 50S ribosomal subunit. The N-terminus interacts with L11 and the large rRNA to form the base of the stalk. The C-terminus forms an elongated spine to which L12 dimers bind in a sequential fashion forming a multimeric L10(L12)X complex.

Forms part of the ribosomal stalk, playing a central role in the interaction of the ribosome with GTP-bound translation factors. This chain is Large ribosomal subunit protein uL10 (rplJ), found in Klebsiella pneumoniae.